The primary structure comprises 705 residues: Elongation factor G (705 aa).

Residues 7-287 (HLTRNIGIMA…YVCAFLPSPL (281 aa)) form the tr-type G domain. GTP is bound by residues 16–23 (AHIDAGKT), 84–88 (DTPGH), and 138–141 (NKMD).

This sequence belongs to the TRAFAC class translation factor GTPase superfamily. Classic translation factor GTPase family. EF-G/EF-2 subfamily.

The protein localises to the cytoplasm. Its function is as follows. Catalyzes the GTP-dependent ribosomal translocation step during translation elongation. During this step, the ribosome changes from the pre-translocational (PRE) to the post-translocational (POST) state as the newly formed A-site-bound peptidyl-tRNA and P-site-bound deacylated tRNA move to the P and E sites, respectively. Catalyzes the coordinated movement of the two tRNA molecules, the mRNA and conformational changes in the ribosome. This chain is Elongation factor G, found in Bacteroides thetaiotaomicron (strain ATCC 29148 / DSM 2079 / JCM 5827 / CCUG 10774 / NCTC 10582 / VPI-5482 / E50).